We begin with the raw amino-acid sequence, 771 residues long: Probable aconitate hydratase, mitochondrial (771 aa).

Residues Gln-86 and 179–181 contribute to the substrate site; that span reads DSH. Residues Cys-372, Cys-435, and Cys-438 each contribute to the [4Fe-4S] cluster site. Substrate-binding positions include Arg-461, Arg-466, Arg-594, and 657–658; that span reads SR.

The protein belongs to the aconitase/IPM isomerase family. Monomer. [4Fe-4S] cluster is required as a cofactor.

The protein localises to the mitochondrion. It catalyses the reaction citrate = D-threo-isocitrate. It functions in the pathway carbohydrate metabolism; tricarboxylic acid cycle; isocitrate from oxaloacetate: step 2/2. Its function is as follows. Catalyzes the isomerization of citrate to isocitrate via cis-aconitate. The chain is Probable aconitate hydratase, mitochondrial (aco2) from Dictyostelium discoideum (Social amoeba).